Here is a 457-residue protein sequence, read N- to C-terminus: Siroheme synthase (457 aa).

The precorrin-2 dehydrogenase /sirohydrochlorin ferrochelatase stretch occupies residues 1 to 204; that stretch reads MDHLPIFCQL…ADAKAVSEIT (204 aa). NAD(+) contacts are provided by residues 22–23 and 43–44; these read DV and LA. Phosphoserine is present on serine 128. The interval 216–457 is uroporphyrinogen-III C-methyltransferase; sequence GEVVLVGAGP…RDKLNWFSNH (242 aa). Residue proline 225 participates in S-adenosyl-L-methionine binding. Aspartate 248 functions as the Proton acceptor in the catalytic mechanism. Residue lysine 270 is the Proton donor of the active site. S-adenosyl-L-methionine contacts are provided by residues 301–303, isoleucine 306, 331–332, methionine 382, and glycine 411; these read GGD and TA.

It in the N-terminal section; belongs to the precorrin-2 dehydrogenase / sirohydrochlorin ferrochelatase family. The protein in the C-terminal section; belongs to the precorrin methyltransferase family.

The enzyme catalyses uroporphyrinogen III + 2 S-adenosyl-L-methionine = precorrin-2 + 2 S-adenosyl-L-homocysteine + H(+). It catalyses the reaction precorrin-2 + NAD(+) = sirohydrochlorin + NADH + 2 H(+). The catalysed reaction is siroheme + 2 H(+) = sirohydrochlorin + Fe(2+). It participates in cofactor biosynthesis; adenosylcobalamin biosynthesis; precorrin-2 from uroporphyrinogen III: step 1/1. It functions in the pathway cofactor biosynthesis; adenosylcobalamin biosynthesis; sirohydrochlorin from precorrin-2: step 1/1. Its pathway is porphyrin-containing compound metabolism; siroheme biosynthesis; precorrin-2 from uroporphyrinogen III: step 1/1. The protein operates within porphyrin-containing compound metabolism; siroheme biosynthesis; siroheme from sirohydrochlorin: step 1/1. It participates in porphyrin-containing compound metabolism; siroheme biosynthesis; sirohydrochlorin from precorrin-2: step 1/1. Functionally, multifunctional enzyme that catalyzes the SAM-dependent methylations of uroporphyrinogen III at position C-2 and C-7 to form precorrin-2 via precorrin-1. Then it catalyzes the NAD-dependent ring dehydrogenation of precorrin-2 to yield sirohydrochlorin. Finally, it catalyzes the ferrochelation of sirohydrochlorin to yield siroheme. The protein is Siroheme synthase of Citrobacter koseri (strain ATCC BAA-895 / CDC 4225-83 / SGSC4696).